The sequence spans 358 residues: Glutamine synthetase (358 aa).

The 80-residue stretch at Val-25–Gly-104 folds into the GS beta-grasp domain. The 248-residue stretch at Tyr-111–Asn-358 folds into the GS catalytic domain.

The protein belongs to the glutamine synthetase family. As to quaternary structure, homooctamer.

The protein localises to the cytoplasm. It catalyses the reaction L-glutamate + NH4(+) + ATP = L-glutamine + ADP + phosphate + H(+). The protein is Glutamine synthetase (GLN1) of Cryptococcus neoformans var. neoformans serotype D (strain B-3501A) (Filobasidiella neoformans).